Here is a 775-residue protein sequence, read N- to C-terminus: Suppressor of glycerol defect protein 1 (775 aa).

Composition is skewed to basic residues over residues 1–11 (MRPIKKSRSLK) and 28–49 (RRGK…RISR). 2 disordered regions span residues 1–101 (MRPI…LLDP) and 152–253 (IDDI…GGDK). 3 stretches are compositionally biased toward basic and acidic residues: residues 52 to 79 (NGYE…DAHR), 177 to 193 (TGDH…REGN), and 209 to 223 (DEFH…RMDP). One can recognise an MIF4G domain in the interval 262–463 (RRKLQGSLNK…ESITNLKENK (202 aa)). The MI domain maps to 565-689 (TLRTSIFVAL…PLTILKHVDF (125 aa)).

This sequence belongs to the CWC22 family.

The protein localises to the nucleus. It is found in the nucleolus. Involved in osmoregulatory glycerol response. This is Suppressor of glycerol defect protein 1 (sgd1) from Schizosaccharomyces pombe (strain 972 / ATCC 24843) (Fission yeast).